Consider the following 748-residue polypeptide: 5-methyltetrahydropteroyltriglutamate--homocysteine methyltransferase (748 aa).

Residues 18–21 (REWK) and K112 contribute to the 5-methyltetrahydropteroyltri-L-glutamate site. L-homocysteine is bound by residues 420–422 (IGS) and E473. L-methionine-binding positions include 420-422 (IGS) and E473. W550 contributes to the 5-methyltetrahydropteroyltri-L-glutamate binding site. D588 is a binding site for L-homocysteine. D588 is an L-methionine binding site. Residue E594 participates in 5-methyltetrahydropteroyltri-L-glutamate binding. Residues H630, C632, and E654 each contribute to the Zn(2+) site. The active-site Proton donor is H683. C715 provides a ligand contact to Zn(2+).

The protein belongs to the vitamin-B12 independent methionine synthase family. Requires Zn(2+) as cofactor.

The enzyme catalyses 5-methyltetrahydropteroyltri-L-glutamate + L-homocysteine = tetrahydropteroyltri-L-glutamate + L-methionine. Its pathway is amino-acid biosynthesis; L-methionine biosynthesis via de novo pathway; L-methionine from L-homocysteine (MetE route): step 1/1. Catalyzes the transfer of a methyl group from 5-methyltetrahydrofolate to homocysteine resulting in methionine formation. The chain is 5-methyltetrahydropteroyltriglutamate--homocysteine methyltransferase from Staphylococcus epidermidis (strain ATCC 35984 / DSM 28319 / BCRC 17069 / CCUG 31568 / BM 3577 / RP62A).